A 160-amino-acid polypeptide reads, in one-letter code: Globin CTT-II beta (160 aa).

The N-terminal stretch at 1–15 (MKFLVLALCIAAAVA) is a signal peptide. In terms of domain architecture, Globin spans 17–160 (PLSADEASLV…NVFNMMFSYL (144 aa)). Heme b contacts are provided by His-75 and His-110.

Belongs to the globin family. Homodimer.

The sequence is that of Globin CTT-II beta from Chironomus thummi thummi (Midge).